We begin with the raw amino-acid sequence, 364 residues long: Endoglucanase A (364 aa).

E169 acts as the Proton donor in catalysis. The Nucleophile role is filled by E293.

The protein belongs to the glycosyl hydrolase 5 (cellulase A) family.

The protein resides in the cytoplasm. It catalyses the reaction Endohydrolysis of (1-&gt;4)-beta-D-glucosidic linkages in cellulose, lichenin and cereal beta-D-glucans.. It carries out the reaction Endohydrolysis of (1-&gt;4)-beta-D-xylosidic linkages in xylans.. In terms of biological role, hydrolyzes both carboxymethylcellulose and xylan. Probably has a role in hydrolyzing oligosaccharides derived from cellulose, which are transported across the cell wall. This is Endoglucanase A (celA) from Ruminococcus albus.